The sequence spans 100 residues: Urease subunit gamma (100 aa).

The protein belongs to the urease gamma subunit family. In terms of assembly, heterotrimer of UreA (gamma), UreB (beta) and UreC (alpha) subunits. Three heterotrimers associate to form the active enzyme.

It localises to the cytoplasm. The enzyme catalyses urea + 2 H2O + H(+) = hydrogencarbonate + 2 NH4(+). It participates in nitrogen metabolism; urea degradation; CO(2) and NH(3) from urea (urease route): step 1/1. This chain is Urease subunit gamma, found in Nostoc sp. (strain PCC 7120 / SAG 25.82 / UTEX 2576).